We begin with the raw amino-acid sequence, 392 residues long: Frizzled-9 (392 aa).

Over 1 to 35 the chain is Extracellular; the sequence is ACDNPEKFQYVEKSLSCAPRCSPGVDVYWSREDKD. A helical transmembrane segment spans residues 36-56; it reads FAFVWMAVWSTLCFVSTAFTV. Topologically, residues 57-72 are cytoplasmic; sequence LTFLLDPHRFQYPERP. The helical transmembrane segment at 73–93 threads the bilayer; it reads IIFLSMCYNVYSVAFIIRSVA. Over 94–119 the chain is Extracellular; it reads GAETIACDRENGELYIIQEGLESTGC. The helical transmembrane segment at 120–140 threads the bilayer; sequence TIVFLILYYFGMASSLWWVVL. The Cytoplasmic portion of the chain corresponds to 141-161; sequence TLTWFLAAGKKWGHEAIEAHS. A helical membrane pass occupies residues 162 to 182; that stretch reads SYFHMAAWGIPAMKTIVILTM. The Extracellular portion of the chain corresponds to 183-206; the sequence is RKVAGDELTGLCYVGSMDVSALTG. A helical membrane pass occupies residues 207-227; that stretch reads FVLIPLSCYLVVGTSFILTGF. Topologically, residues 228 to 253 are cytoplasmic; that stretch reads VALFHIRKIMKTGGTNTEKLEKLMVK. The chain crosses the membrane as a helical span at residues 254–274; sequence IGVFSILYTVPATCVIVCYFY. At 275-312 the chain is on the extracellular side; sequence ERLNVDYWNLRALERACVPLPGRRAADCSLEASVPTVA. A helical transmembrane segment spans residues 313–333; that stretch reads VFMLKIFMSLVVGITSGVWVW. Topologically, residues 334 to 392 are cytoplasmic; the sequence is SSKTLQTWQSLCNRKLGVRTRGKPCSGVSCGGVHCHYKAPTVMLHMTKTDPYLDNPTHV. The Lys-Thr-X-X-X-Trp motif, mediates interaction with the PDZ domain of Dvl family members motif lies at 336–341; it reads KTLQTW. The short motif at 390–392 is the PDZ-binding element; that stretch reads THV.

It belongs to the G-protein coupled receptor Fz/Smo family.

It is found in the cell membrane. Its function is as follows. Receptor for WNT2 that is coupled to the beta-catenin canonical signaling pathway, which leads to the activation of disheveled proteins, inhibition of GSK-3 kinase, nuclear accumulation of beta-catenin and activation of Wnt target genes. The protein is Frizzled-9 (FZD9) of Gallus gallus (Chicken).